The chain runs to 299 residues: CCR4-NOT transcription complex subunit 9 (299 aa).

The protein belongs to the CNOT9 family. Homodimer. Component of the CCR4-NOT complex.

Its subcellular location is the nucleus. The protein resides in the cytoplasm. The protein localises to the P-body. Functionally, component of the CCR4-NOT complex which is one of the major cellular mRNA deadenylases and is linked to various cellular processes including bulk mRNA degradation, miRNA-mediated repression, translational repression during translational initiation and general transcription regulation. Additional complex functions may be a consequence of its influence on mRNA expression. Involved in down-regulation of MYB- and JUN-dependent transcription. Enhances ligand-dependent transcriptional activity of nuclear hormone receptors. May play a role in cell differentiation. This chain is CCR4-NOT transcription complex subunit 9, found in Xenopus tropicalis (Western clawed frog).